The sequence spans 201 residues: RILP-like protein 2 (201 aa).

The 95-residue stretch at 14 to 108 (GPEIALDKDP…LKDGPQMGVG (95 aa)) folds into the RH1 domain. Positions 67–155 (LEMLEALVNQ…AQDELQCYKS (89 aa)) form a coiled coil. The region spanning 121–197 (RPRFTLQELR…TVKSLFSFKQ (77 aa)) is the RH2 domain. Residues 177–201 (SPRENESKEKSTVKSLFSFKQGKQT) are disordered. Over residues 179–188 (RENESKEKST) the composition is skewed to basic and acidic residues.

It belongs to the RILPL family.

The protein localises to the cytoplasm. It is found in the cytosol. The protein resides in the cytoskeleton. It localises to the microtubule organizing center. Its subcellular location is the centrosome. The protein localises to the cell projection. It is found in the cilium. In terms of biological role, involved in cell shape and neuronal morphogenesis, positively regulating the establishment and maintenance of dendritic spines. Plays a role in cellular protein transport. This chain is RILP-like protein 2 (rilpl2), found in Xenopus tropicalis (Western clawed frog).